Reading from the N-terminus, the 259-residue chain is Phosphate import ATP-binding protein PstB (259 aa).

An ABC transporter domain is found at 6 to 254 (SKNESVVFDV…PKDKRTEDYI (249 aa)). Residue 45–52 (GPSGCGKS) participates in ATP binding.

It belongs to the ABC transporter superfamily. Phosphate importer (TC 3.A.1.7) family. In terms of assembly, the complex is composed of two ATP-binding proteins (PstB), two transmembrane proteins (PstC and PstA) and a solute-binding protein (PstS).

It localises to the cell membrane. The catalysed reaction is phosphate(out) + ATP + H2O = ADP + 2 phosphate(in) + H(+). Functionally, part of the ABC transporter complex PstSACB involved in phosphate import. Responsible for energy coupling to the transport system. This chain is Phosphate import ATP-binding protein PstB, found in Desulfitobacterium hafniense (strain Y51).